The primary structure comprises 116 residues: Large ribosomal subunit protein bL19 (116 aa).

It belongs to the bacterial ribosomal protein bL19 family.

In terms of biological role, this protein is located at the 30S-50S ribosomal subunit interface and may play a role in the structure and function of the aminoacyl-tRNA binding site. The protein is Large ribosomal subunit protein bL19 of Staphylococcus aureus (strain Mu3 / ATCC 700698).